We begin with the raw amino-acid sequence, 286 residues long: MSTNEMNQKKRLNRSGSLSSHLTRSWPWQLTLSYLFFMLILPVIALLSRASDELFKDFWQIAAEPVAISTYVVTLMTALFATLINGFFGVIIAWVLVRYNFPGKRIIDAAIDLPFALPTSVAGLTLATVYSDQGWIGHLFESIGIKVAFTRVGVAVAMIFVSFPFVVRTLQPVLVEIDQELEEAAWSLGASTWRTFWRVIFPPLTPAIVTGVALAFSRAIGEYGSVVIVASNIPFKDLTAPVLIFQRLEQYDYTGATIIGTVILSISLFLLFGINFIQSLNQLYVK.

The next 7 helical transmembrane spans lie at 27-47 (PWQL…IALL), 77-97 (TALF…WVLV), 106-126 (IIDA…GLTL), 147-167 (VAFT…PFVV), 196-216 (FWRV…ALAF), 225-245 (SVVI…VLIF), and 257-277 (TIIG…INFI). Residues 71–272 (YVVTLMTALF…ILSISLFLLF (202 aa)) enclose the ABC transmembrane type-1 domain.

It belongs to the binding-protein-dependent transport system permease family. CysTW subfamily.

The protein localises to the plastid. The protein resides in the chloroplast membrane. Part of the ABC transporter complex cysAWTP (TC 3.A.1.6.1) involved in sulfate/thiosulfate import. Probably responsible for the translocation of the substrate across the membrane. The polypeptide is Probable sulfate transport system permease protein cysT (cysT) (Chlorokybus atmophyticus (Soil alga)).